The chain runs to 396 residues: Tryptophan synthase beta chain (396 aa).

Lys-88 bears the N6-(pyridoxal phosphate)lysine mark.

It belongs to the TrpB family. Tetramer of two alpha and two beta chains. It depends on pyridoxal 5'-phosphate as a cofactor.

It carries out the reaction (1S,2R)-1-C-(indol-3-yl)glycerol 3-phosphate + L-serine = D-glyceraldehyde 3-phosphate + L-tryptophan + H2O. It functions in the pathway amino-acid biosynthesis; L-tryptophan biosynthesis; L-tryptophan from chorismate: step 5/5. Its function is as follows. The beta subunit is responsible for the synthesis of L-tryptophan from indole and L-serine. This is Tryptophan synthase beta chain from Shewanella oneidensis (strain ATCC 700550 / JCM 31522 / CIP 106686 / LMG 19005 / NCIMB 14063 / MR-1).